A 125-amino-acid polypeptide reads, in one-letter code: Ribosome-binding factor A (125 aa).

It belongs to the RbfA family. Monomer. Binds 30S ribosomal subunits, but not 50S ribosomal subunits or 70S ribosomes.

It is found in the cytoplasm. One of several proteins that assist in the late maturation steps of the functional core of the 30S ribosomal subunit. Associates with free 30S ribosomal subunits (but not with 30S subunits that are part of 70S ribosomes or polysomes). Required for efficient processing of 16S rRNA. May interact with the 5'-terminal helix region of 16S rRNA. The sequence is that of Ribosome-binding factor A from Acidovorax sp. (strain JS42).